The following is a 236-amino-acid chain: Small ribosomal subunit protein uS2c (236 aa).

This sequence belongs to the universal ribosomal protein uS2 family.

It is found in the plastid. It localises to the chloroplast. The polypeptide is Small ribosomal subunit protein uS2c (rps2) (Helianthus annuus (Common sunflower)).